A 38-amino-acid polypeptide reads, in one-letter code: Allatostatin-C (38 aa).

A propeptide spanning residues 1–19 (MRRALDGPGSSSLDTRQAD) is cleaved from the precursor. Gln22 is subject to Pyrrolidone carboxylic acid; partial.

The protein belongs to the allatostatin family. As to expression, in its non-pyroglutamate form, expressed in antennal lobe (AL), corpora cardiaca (CC), corpora allata (CA) and gnathal ganglion (GNG) with expression in AL detected in most animals and expression in CC, CA and GNG detected in few animals (at protein level). In its pyroglutamate form, expressed in antennal lobe (AL), corpora cardiaca (CC) and corpora allata (CA) with expression detected in few animals (at protein level). Not expressed in GNG (protein level).

Its subcellular location is the secreted. Functionally, strongly inhibits juvenile hormone biosynthesis. The sequence is that of Allatostatin-C from Agrotis ipsilon (Black cutworm moth).